The chain runs to 503 residues: AMP phosphorylase (503 aa).

AMP contacts are provided by residues Gly168, 194-199 (SRAITS), and Thr203. Catalysis depends on Asp256, which acts as the Proton donor. 2 residues coordinate AMP: Ser264 and Lys288.

Belongs to the thymidine/pyrimidine-nucleoside phosphorylase family. Type 2 subfamily.

The catalysed reaction is AMP + phosphate = alpha-D-ribose 1,5-bisphosphate + adenine. It catalyses the reaction CMP + phosphate = cytosine + alpha-D-ribose 1,5-bisphosphate. It carries out the reaction UMP + phosphate = alpha-D-ribose 1,5-bisphosphate + uracil. In terms of biological role, catalyzes the conversion of AMP and phosphate to adenine and ribose 1,5-bisphosphate (R15P). Exhibits phosphorylase activity toward CMP and UMP in addition to AMP. Functions in an archaeal AMP degradation pathway, together with R15P isomerase and RubisCO. The sequence is that of AMP phosphorylase from Thermococcus sibiricus (strain DSM 12597 / MM 739).